Reading from the N-terminus, the 469-residue chain is Keratin, type II cytoskeletal 7 (469 aa).

N-acetylserine is present on serine 2. Phosphoserine is present on residues serine 2, serine 6, and serine 7. Residues 2–90 (SIHFSSPVFT…DPSLQRVRQE (89 aa)) form a head region. Residue serine 12 is glycosylated (O-linked (GlcNAc) serine). A Dimethylated arginine; alternate modification is found at arginine 20. An Omega-N-methylarginine; alternate modification is found at arginine 20. Residues serine 53, serine 71, and serine 83 each carry the phosphoserine modification. The coil 1A stretch occupies residues 90 to 126 (EEREQIKTLNNKFASFIDKVRFLEQQNKLLETKWTLL). Positions 91–403 (EREQIKTLNN…KLLEGEESRL (313 aa)) constitute an IF rod domain. Threonine 97 carries the phosphothreonine modification. The tract at residues 127–144 (QEQKSAKSSRLPDIFEAQ) is linker 1. A Glycyl lysine isopeptide (Lys-Gly) (interchain with G-Cter in SUMO2) cross-link involves residue lysine 130. The segment at 145 to 236 (IAGLRGQLEA…TLNETELTEL (92 aa)) is coil 1B. An N6-acetyllysine modification is found at lysine 179. Positions 237 to 260 (QSQISDTSVVLSMDNSRSLDLDGI) are linker 12. Serine 252 and serine 254 each carry phosphoserine. Residues 261–399 (IAEVKAQYEE…ATYRKLLEGE (139 aa)) form a coil 2 region. Glycyl lysine isopeptide (Lys-Gly) (interchain with G-Cter in SUMO2) cross-links involve residues lysine 265 and lysine 286. Threonine 289 bears the Phosphothreonine mark. Residues lysine 296 and lysine 331 each participate in a glycyl lysine isopeptide (Lys-Gly) (interchain with G-Cter in SUMO2) cross-link. Residues 400 to 469 (ESRLAGDGVG…ASASRRSARN (70 aa)) form a tail region.

This sequence belongs to the intermediate filament family. Heterotetramer of two type I and two type II keratins. Interacts with eukaryotic translation initiator factor 3 (eIF3) subunit EIF3S10. Interacts with GPER1. Post-translationally, arg-20 is dimethylated, probably to asymmetric dimethylarginine.

Functionally, blocks interferon-dependent interphase and stimulates DNA synthesis in cells. This is Keratin, type II cytoskeletal 7 from Pan troglodytes (Chimpanzee).